A 338-amino-acid chain; its full sequence is MKVYYDKDADLSLIKGKKVTIVGYGSQGHAHAQNLKDSGVKVTVGLRKDGASWKKAEAAGLKVEEIAKAVKGADVVMILLPDENIPQVYNEEVAPNLKKGAALAFAHGFNVHYNQVVPRADVDVIMVAPKGPGHTVRSEYLKGGGVPSLIAVYQDVTKKAKDIALSYAAANGGTKGGVIETNFREETETDLFGEQAVLCGGAVELVKMGFETLTEAGYAPEMAYFECLHELKLIVDLMYEGGIANMNYSISNNAEYGEYVTGTEVINEQSRVAMRNALKRIQTGEYAKMFIQEGKTNYPSMTARRRLNAVHPIETVGGQLRDMMPWIRKNKLVDQTKN.

The KARI N-terminal Rossmann domain occupies 1 to 181; sequence MKVYYDKDAD…GGTKGGVIET (181 aa). NADP(+)-binding positions include 24–27, Arg-47, and Ser-52; that span reads YGSQ. Residue His-107 is part of the active site. Residue Gly-133 participates in NADP(+) binding. In terms of domain architecture, KARI C-terminal knotted spans 182-327; the sequence is NFREETETDL…GQLRDMMPWI (146 aa). Mg(2+)-binding residues include Asp-190, Glu-194, Glu-226, and Glu-230. Ser-251 is a binding site for substrate.

Belongs to the ketol-acid reductoisomerase family. It depends on Mg(2+) as a cofactor.

It catalyses the reaction (2R)-2,3-dihydroxy-3-methylbutanoate + NADP(+) = (2S)-2-acetolactate + NADPH + H(+). The enzyme catalyses (2R,3R)-2,3-dihydroxy-3-methylpentanoate + NADP(+) = (S)-2-ethyl-2-hydroxy-3-oxobutanoate + NADPH + H(+). Its pathway is amino-acid biosynthesis; L-isoleucine biosynthesis; L-isoleucine from 2-oxobutanoate: step 2/4. The protein operates within amino-acid biosynthesis; L-valine biosynthesis; L-valine from pyruvate: step 2/4. Its function is as follows. Involved in the biosynthesis of branched-chain amino acids (BCAA). Catalyzes an alkyl-migration followed by a ketol-acid reduction of (S)-2-acetolactate (S2AL) to yield (R)-2,3-dihydroxy-isovalerate. In the isomerase reaction, S2AL is rearranged via a Mg-dependent methyl migration to produce 3-hydroxy-3-methyl-2-ketobutyrate (HMKB). In the reductase reaction, this 2-ketoacid undergoes a metal-dependent reduction by NADPH to yield (R)-2,3-dihydroxy-isovalerate. The polypeptide is Ketol-acid reductoisomerase (NADP(+)) (Dechloromonas aromatica (strain RCB)).